Here is a 287-residue protein sequence, read N- to C-terminus: Bifunctional protein FolD (287 aa).

Residues glycine 165–serine 167, serine 190, and isoleucine 231 contribute to the NADP(+) site.

Belongs to the tetrahydrofolate dehydrogenase/cyclohydrolase family. As to quaternary structure, homodimer.

The enzyme catalyses (6R)-5,10-methylene-5,6,7,8-tetrahydrofolate + NADP(+) = (6R)-5,10-methenyltetrahydrofolate + NADPH. The catalysed reaction is (6R)-5,10-methenyltetrahydrofolate + H2O = (6R)-10-formyltetrahydrofolate + H(+). Its pathway is one-carbon metabolism; tetrahydrofolate interconversion. In terms of biological role, catalyzes the oxidation of 5,10-methylenetetrahydrofolate to 5,10-methenyltetrahydrofolate and then the hydrolysis of 5,10-methenyltetrahydrofolate to 10-formyltetrahydrofolate. In Carboxydothermus hydrogenoformans (strain ATCC BAA-161 / DSM 6008 / Z-2901), this protein is Bifunctional protein FolD.